The primary structure comprises 452 residues: Sulfide:quinone oxidoreductase, mitochondrial (452 aa).

FAD is bound by residues 54–55 (AG), Glu-77, Gln-85, and Val-120. Cys-204 serves as the catalytic Cysteine persulfide intermediate. Cys-204 and Cys-380 are disulfide-bonded. Residues Asp-337 and 345–348 (KTAA) each bind FAD. The active-site Cysteine persulfide intermediate is Cys-380.

The protein belongs to the SQRD family. FAD serves as cofactor.

It localises to the mitochondrion. The catalysed reaction is ubiquinone-10 + hydrogen sulfide + sulfite + 2 H(+) = ubiquinol-10 + thiosulfate. The enzyme catalyses a quinone + hydrogen sulfide + glutathione + H(+) = S-sulfanylglutathione + a quinol. In terms of biological role, catalyzes the oxidation of hydrogen sulfide, with the help of a quinone. The chain is Sulfide:quinone oxidoreductase, mitochondrial from Dictyostelium discoideum (Social amoeba).